Here is a 306-residue protein sequence, read N- to C-terminus: tRNA dimethylallyltransferase 2 (306 aa).

19 to 26 (GATASGKT) contacts ATP. 21-26 (TASGKT) serves as a coordination point for substrate. The interval 44–47 (DSRQ) is interaction with substrate tRNA.

It belongs to the IPP transferase family. In terms of assembly, monomer. Requires Mg(2+) as cofactor.

It carries out the reaction adenosine(37) in tRNA + dimethylallyl diphosphate = N(6)-dimethylallyladenosine(37) in tRNA + diphosphate. In terms of biological role, catalyzes the transfer of a dimethylallyl group onto the adenine at position 37 in tRNAs that read codons beginning with uridine, leading to the formation of N6-(dimethylallyl)adenosine (i(6)A). This chain is tRNA dimethylallyltransferase 2, found in Citrifermentans bemidjiense (strain ATCC BAA-1014 / DSM 16622 / JCM 12645 / Bem) (Geobacter bemidjiensis).